The chain runs to 2157 residues: MQPHRVFIFGDQTGGFATGLQQLLLDKTNPSLVYFVDHANLALRQELSRLPSTDRETLPLIGSVQDILTLHKKGERNVVIDSILSTVYHLACFIYKYGNAGCAYPNRQDVHVTGMCVGSLAAAAVSCSRSIGDVIVAGIVAIRAALRVGLRAHQAALLISNRAAPHTHWSYAVSTESLRLDLIKDALEKFAQDMDTSPLSHPYISAIGLDSVTVSGPPSHLHQFWRENTTFHKPIPIPIWAPYHGPHIFGDSDVETIIESLHPIPKLSQQAPIISSGSGVMASQTLADLIRAALRDILLHRLDLPALVGHIKDIFRSSPNQDFAMTPIATNAATSLVATTAKAAGNTGSVDNEIMDAAALAGSASRATSAKTHDSKIAIIGMSGRFPEAADLDSFWSLLEQGVDAYRPVPPDRFDAHAHHDETGRRKNTSKVLGGCWINQPGLFDPKFFSISPKEAEQSDPAQRLALQTAYEALEMAGVVPDRTQSTQRDRVGVFYGMVSDDWREINSGQNIDTYFIPGGIRAFTPGRINYHFKFSGPSITVDTACSSSLAAIHVACNSLWRGDCDTAVAGGVNVLTNPDIFAGLDRGHFLSTTGNCKTFDDDADGYCRADGVGTVILKRLEDAVMDKDPILAVLNSAYTNHSAEAVSITRPHAGAQELIFSKLLRETGIHPHDVSYIEMHGTGTQAGDATEMSSVLRTFAPDTGRLSSQTLHLGSAKSNVGHGEAASGVTSLIKVLLMMKHNTIPPHCGIKGRINHRFPTDLRERNVFIASQPVAWNKPHAGSGKRRVFINNFSAAGGNSALLLEDAPTDEHPETKDPRSTHIVAVSAKSSTSLANNLKRLRDFVQDNIHDLDSLSKLSYTTTARRIHYPFRAAMAVSSRDQLLQGIESVLLRDEMPKPGKSQKNIGFVFSGQGAQYAGMGRHLFHNNHTFRTQILACNQICLSHGFPSILEIFKQDVDMNSLEPLLVQLGTTCLQMSLVAFWKSLGVTPDFCIGHSLGEYAALQAAGVLSVSDTIYLTGIRARMLQEKCSAGSHAMLAVRAPLARVNALLDPAIHEVTCLNGPQDVVIGGRVADVEELEKELAKQDIKAVKVSVPFAFHSTQVEPILGEFCDAARGVPFQTQNIPVISTLLGEVVQPEATGVFGPGYLKRHCREPVNFAAAVEAARDANVIHAGTVFVEIGPHPVCLALLKSNMGPDAVTLASLHRKDDGWKVLADTLAALYQAGLKINWDEVHRDFASCQEVLPLPSYSWDNKNYWIQYVHNWTLTKGDEPAATAETTALQALDGLTSSVQKIIRQTDGPGSLVTIVVQSDFGSARLAEVAQGHKVNGEMLCTSSLYAEIGMTLGRQLLEKYRPDLDGYSTEIKDMSVDKPLILKDENKRTLFRAEVVHDKSTHTATMSIYSVDSAGNKTVDHARCLLRFADPTSWLDEWERTHYLIDRSVRWLEERAEQGTDSLLSRGIVYKLFSSLVDYSPSFKGLQEVILNSGDREAAAKVRLQAKKGDFDCNPMWIDSFGQLTGFLMNGHDFTGKDEVFINHGWRSMRCAKPFRKDAVYRTYIRMQHVEKTKYRGDLYIIEDGVIVAVFGGMTFLGMSRSLLNKVLPPRRGTDAINTAHPVAAAQQGMAASAKDTERRPLDIPTRAQRQPSSAQTGTMGRILAILSKEVGLSMETLTDDLVFADYGVDSLLSLTITGRIREELGLDMDSSIFTHYSTLGELKAFLGADQLPDDAVACESSNGQHTPQTSDKGSGTLAVQKTDDDTSPDMTLNRVCAIIAEEVGISVQELSSSQDFQELGIDSLSSLTILSRVREELQLDLESDFFDTHPSFYSLQKALCGSEAASNGAPEANETTPSSHRLESDLRSITWQSGQNIVASPPHATSILVSGSPSTARMILVLFPDGSGSAASYGALAPKIRRDIAVYALNCPWRTNGEEILRLGVTLDQMVAKHLVEVGRILDSHRHGRPGSANASVGLALGGWSAGGILALEAVRQLGEAGVAVQKMVLLDAPNPIGLQNPPPRMFHFLDELGILGAGKGKAPAWVLRHFDAMVNLLKSYRPRRLGAEDAPKCLIVYAKDGICKDPDGPRMDTKPDDAREMLWLLYNRVDFSAEGWKTLVGQQNLAVGVVDDVNHFSMMNPGPKMIEMGNLIGEFLLGPS.

The tract at residues 7–244 is N-terminal acylcarrier protein transacylase domain (SAT); the sequence is FIFGDQTGGF…IPIPIWAPYH (238 aa). The Ketosynthase family 3 (KS3) domain occupies 374–807; it reads DSKIAIIGMS…GGNSALLLED (434 aa). Catalysis depends on for beta-ketoacyl synthase activity residues cysteine 546, histidine 681, and histidine 723. Residues 908-1213 form a malonyl-CoA:ACP transacylase (MAT) domain region; sequence GFVFSGQGAQ…ASLHRKDDGW (306 aa). Serine 998 acts as the For acyl/malonyl transferase activity in catalysis. The segment at 1290-1605 is product template (PT) domain; that stretch reads TSSVQKIIRQ…RSLLNKVLPP (316 aa). Residues 1294–1428 form an N-terminal hotdog fold region; it reads QKIIRQTDGP…CLLRFADPTS (135 aa). One can recognise a PKS/mFAS DH domain in the interval 1294–1600; sequence QKIIRQTDGP…FLGMSRSLLN (307 aa). The Proton acceptor; for dehydratase activity role is filled by histidine 1327. A C-terminal hotdog fold region spans residues 1455-1600; sequence TDSLLSRGIV…FLGMSRSLLN (146 aa). Aspartate 1514 serves as the catalytic Proton donor; for dehydratase activity. Positions 1626 to 1652 are disordered; the sequence is AASAKDTERRPLDIPTRAQRQPSSAQT. Residues 1643-1652 are compositionally biased toward polar residues; that stretch reads AQRQPSSAQT. The Carrier 1 domain maps to 1649 to 1726; it reads SAQTGTMGRI…ELKAFLGADQ (78 aa). Residue serine 1686 is modified to O-(pantetheine 4'-phosphoryl)serine. Residues 1733–1762 form a disordered region; that stretch reads ACESSNGQHTPQTSDKGSGTLAVQKTDDDT. Polar residues predominate over residues 1735-1755; sequence ESSNGQHTPQTSDKGSGTLAV. The Carrier 2 domain occupies 1765-1839; the sequence is DMTLNRVCAI…SLQKALCGSE (75 aa). Serine 1799 carries the post-translational modification O-(pantetheine 4'-phosphoryl)serine. The disordered stretch occupies residues 1840–1859; that stretch reads AASNGAPEANETTPSSHRLE. The segment at 1875-2151 is thioesterase (TE) domain; the sequence is ASPPHATSIL…MIEMGNLIGE (277 aa). Serine 1981 functions as the For thioesterase activity in the catalytic mechanism.

Functionally, polyketide synthase; part of the Pks2 gene cluster that mediates the formation of infectious structures (appressoria), enabling these fungi to kill insects faster. The product of the Pks2 gene cluster is different from the one of Pks1 and has still not been identified. This Metarhizium robertsii (strain ARSEF 23 / ATCC MYA-3075) (Metarhizium anisopliae (strain ARSEF 23)) protein is Polyketide synthase 2.